The following is a 255-amino-acid chain: tRNA1(Val) (adenine(37)-N6)-methyltransferase (255 aa).

Belongs to the methyltransferase superfamily. tRNA (adenine-N(6)-)-methyltransferase family.

The protein resides in the cytoplasm. The catalysed reaction is adenosine(37) in tRNA1(Val) + S-adenosyl-L-methionine = N(6)-methyladenosine(37) in tRNA1(Val) + S-adenosyl-L-homocysteine + H(+). In terms of biological role, specifically methylates the adenine in position 37 of tRNA(1)(Val) (anticodon cmo5UAC). This Porphyromonas gingivalis (strain ATCC 33277 / DSM 20709 / CIP 103683 / JCM 12257 / NCTC 11834 / 2561) protein is tRNA1(Val) (adenine(37)-N6)-methyltransferase.